A 270-amino-acid chain; its full sequence is MKKITIYDLAELSGVSASAVSAILNGNWKKRRISAKLAEKVTRIAEEQGYAINRQASMLRSKKSHVIGMIIPKYDNRYFGSIAERFEEMARERGLLPIITCTRRRPELEIEAVKAMLSWQVDWVVATGATNPDKISALCQQAGVPTVNLDLPGSLSPSVISDNYGGAKALTHKILANSARRRGELAPLTFIGGRRATITPASVYAASTMRIASWGLACRRRIFWLPAIRKATLRTACRSGLAARRRCCRGYLLTRRYPWKGLCAGCRRWV.

Residues 1-61 (MKKITIYDLA…INRQASMLRS (61 aa)) form the HTH lacI-type domain. Residues 6–25 (IYDLAELSGVSASAVSAILN) constitute a DNA-binding region (H-T-H motif).

Functionally, repressor for the genes of the ribitol operon. Binds D-ribulose as an inducer. This Klebsiella aerogenes (Enterobacter aerogenes) protein is Ribitol operon repressor (rbtR).